The chain runs to 213 residues: Dimethylamine corrinoid protein (213 aa).

In terms of domain architecture, B12-binding N-terminal spans 1 to 90 (MSKEELLQEL…LMPEGASGSK (90 aa)). One can recognise a B12-binding domain in the interval 91-213 (LGVIVNGTVE…AVAKAKELLA (123 aa)). Residue His-104 coordinates methylcob(III)alamin.

The protein belongs to the methylamine corrinoid protein family. In terms of assembly, copurifies with MtbA.

It participates in one-carbon metabolism; methanogenesis from dimethylamine. Its function is as follows. Acts as a methyl group carrier between MtbB1 and MtbA. Binds 1 corrinoid cofactor per protein, is subsequently demethylated by MtbA. This is Dimethylamine corrinoid protein from Methanosarcina barkeri.